Consider the following 578-residue polypeptide: Cholesterol oxidase (578 aa).

FAD contacts are provided by G15, E34, G85, A90, and V230. H470 acts as the Proton acceptor in catalysis. G503 contributes to the FAD binding site. The segment at 529-551 (WPNKGETDRRPPQGEPYRRLAPI) is disordered. The segment covering 533 to 546 (GETDRRPPQGEPYR) has biased composition (basic and acidic residues).

It belongs to the GMC oxidoreductase family. It depends on FAD as a cofactor.

It localises to the secreted. It catalyses the reaction cholesterol + O2 = cholest-5-en-3-one + H2O2. It carries out the reaction cholest-5-en-3-one = cholest-4-en-3-one. Its pathway is steroid metabolism; cholesterol degradation. In terms of biological role, bifunctional enzyme that catalyzes the oxidation and isomerization of cholesterol to cholestenone (cholest-4-en-3-one), an initial step in the cholesterol degradation process. Contributes to virulence. This Mycobacterium tuberculosis (strain CDC 1551 / Oshkosh) protein is Cholesterol oxidase (choD).